A 505-amino-acid polypeptide reads, in one-letter code: Histidine ammonia-lyase (505 aa).

A cross-link (5-imidazolinone (Ala-Gly)) is located at residues A141 to G143. S142 carries the post-translational modification 2,3-didehydroalanine (Ser).

Belongs to the PAL/histidase family. Post-translationally, contains an active site 4-methylidene-imidazol-5-one (MIO), which is formed autocatalytically by cyclization and dehydration of residues Ala-Ser-Gly.

The protein resides in the cytoplasm. It catalyses the reaction L-histidine = trans-urocanate + NH4(+). It participates in amino-acid degradation; L-histidine degradation into L-glutamate; N-formimidoyl-L-glutamate from L-histidine: step 1/3. The polypeptide is Histidine ammonia-lyase (Bacillus thuringiensis subsp. konkukian (strain 97-27)).